The sequence spans 92 residues: Large ribosomal subunit protein eL43y (92 aa).

The C4-type zinc-finger motif lies at 39–60 (CEFCGKYGVKRKAVGIWGCKDC).

This sequence belongs to the eukaryotic ribosomal protein eL43 family.

The polypeptide is Large ribosomal subunit protein eL43y (RPL37AC) (Arabidopsis thaliana (Mouse-ear cress)).